The following is a 223-amino-acid chain: UPF0441 protein ETA_04310 (223 aa).

Residues 166–223 (YGAATPGRTMTVPKSALAPKPATTSTVTRGGFGESVAKQNTMQRNSSSTGSANRSMGG) form a disordered region. Residues 202–223 (AKQNTMQRNSSSTGSANRSMGG) are compositionally biased toward polar residues.

Belongs to the UPF0441 family.

The polypeptide is UPF0441 protein ETA_04310 (Erwinia tasmaniensis (strain DSM 17950 / CFBP 7177 / CIP 109463 / NCPPB 4357 / Et1/99)).